We begin with the raw amino-acid sequence, 396 residues long: Acetate kinase (396 aa).

Asparagine 8 is a binding site for Mg(2+). ATP is bound at residue lysine 15. Position 89 (arginine 89) interacts with substrate. Aspartate 146 acts as the Proton donor/acceptor in catalysis. ATP contacts are provided by residues 206 to 210 (HLGNG), 280 to 282 (DMR), and 328 to 332 (GVGEN). Glutamate 382 contributes to the Mg(2+) binding site.

It belongs to the acetokinase family. In terms of assembly, homodimer. Requires Mg(2+) as cofactor. Mn(2+) serves as cofactor.

It is found in the cytoplasm. The enzyme catalyses acetate + ATP = acetyl phosphate + ADP. It participates in metabolic intermediate biosynthesis; acetyl-CoA biosynthesis; acetyl-CoA from acetate: step 1/2. Functionally, catalyzes the formation of acetyl phosphate from acetate and ATP. Can also catalyze the reverse reaction. In Clavibacter michiganensis subsp. michiganensis (strain NCPPB 382), this protein is Acetate kinase.